Consider the following 277-residue polypeptide: Phosphatidylglycerol--prolipoprotein diacylglyceryl transferase (277 aa).

Transmembrane regions (helical) follow at residues 18 to 38 (IAIY…YFMA), 54 to 74 (DLLV…YVIF), 91 to 111 (EGGI…IVFA), and 115 to 135 (GLSF…GQAI). Arg-137 is an a 1,2-diacyl-sn-glycero-3-phospho-(1'-sn-glycerol) binding site. A run of 3 helical transmembrane segments spans residues 177 to 197 (QPTF…LLLL), 205 to 225 (GELF…IEGM), and 236 to 256 (LRTA…LWVY).

This sequence belongs to the Lgt family.

The protein resides in the cell membrane. The enzyme catalyses L-cysteinyl-[prolipoprotein] + a 1,2-diacyl-sn-glycero-3-phospho-(1'-sn-glycerol) = an S-1,2-diacyl-sn-glyceryl-L-cysteinyl-[prolipoprotein] + sn-glycerol 1-phosphate + H(+). It functions in the pathway protein modification; lipoprotein biosynthesis (diacylglyceryl transfer). In terms of biological role, catalyzes the transfer of the diacylglyceryl group from phosphatidylglycerol to the sulfhydryl group of the N-terminal cysteine of a prolipoprotein, the first step in the formation of mature lipoproteins. The polypeptide is Phosphatidylglycerol--prolipoprotein diacylglyceryl transferase (Shouchella clausii (strain KSM-K16) (Alkalihalobacillus clausii)).